Reading from the N-terminus, the 331-residue chain is Ribosomal RNA small subunit methyltransferase H (331 aa).

Residues 49-51 (GGH), Asp-68, Leu-102, Asp-116, and Gln-123 contribute to the S-adenosyl-L-methionine site.

It belongs to the methyltransferase superfamily. RsmH family.

The protein localises to the cytoplasm. It carries out the reaction cytidine(1402) in 16S rRNA + S-adenosyl-L-methionine = N(4)-methylcytidine(1402) in 16S rRNA + S-adenosyl-L-homocysteine + H(+). In terms of biological role, specifically methylates the N4 position of cytidine in position 1402 (C1402) of 16S rRNA. This Renibacterium salmoninarum (strain ATCC 33209 / DSM 20767 / JCM 11484 / NBRC 15589 / NCIMB 2235) protein is Ribosomal RNA small subunit methyltransferase H.